A 485-amino-acid chain; its full sequence is Dipeptide and tripeptide permease C (485 aa).

The Cytoplasmic segment spans residues 1–12 (MKTPSQPRAIYY). Residues 13–33 (IVAIQIWEYFSFYGMRALLIL) form a helical membrane-spanning segment. Residues 34–46 (YLTHQLGFDDNHA) are Periplasmic-facing. The helical transmembrane segment at 47-67 (ISLFSAYASLVYVTPILGGWL) threads the bilayer. Residues 68–70 (ADR) lie on the Cytoplasmic side of the membrane. A helical membrane pass occupies residues 71-93 (LLGNRTAVIAGALLMTLGHVVLG). The Periplasmic segment spans residues 94 to 102 (IDTNSTFSL). Residues 103–125 (YLALAIIICGYGLFKSNISCLLG) traverse the membrane as a helical segment. Residues 126 to 140 (ELYDENDHRRDGGFS) are Cytoplasmic-facing. Residues 141–161 (LLYAAGNIGSIAAPIACGLAA) form a helical membrane-spanning segment. Topologically, residues 162 to 164 (QWY) are periplasmic. The chain crosses the membrane as a helical span at residues 165–185 (GWHVGFALAGGGMFIGLLIFL). Residues 186–208 (SGHRHFQSTRSMDKKALTSVKFA) lie on the Cytoplasmic side of the membrane. A helical transmembrane segment spans residues 209–229 (LPVWSWLVVMLCLAPVFFTLL). At 230–234 (LENDW) the chain is on the periplasmic side. The helical transmembrane segment at 235 to 255 (SGYLLAIVCLIAAQIIARMMI) threads the bilayer. Over 256–262 (KFPEHRR) the chain is Cytoplasmic. The chain crosses the membrane as a helical span at residues 263 to 283 (ALWQIVLLMFVGTLFWVLAQQ). The Periplasmic portion of the chain corresponds to 284-307 (GGSTISLFIDRFVNRQAFNIEVPT). A helical transmembrane segment spans residues 308-328 (ALFQSVNAIAVMLAGVVLAWL). Over 329-340 (ASPESRGNSTLR) the chain is Cytoplasmic. The chain crosses the membrane as a helical span at residues 341–361 (VWLKFAFGLLLMACGFMLLAF). The Periplasmic portion of the chain corresponds to 362–375 (DARHAAADGQASMG). The chain crosses the membrane as a helical span at residues 376–396 (VMISGLALMGFAELFIDPVAI). The Cytoplasmic portion of the chain corresponds to 397–406 (AQITRLKMSG). Residues 407-427 (VLTGIYMLATGAVANWLAGVV) form a helical membrane-spanning segment. The Periplasmic segment spans residues 428 to 446 (AQQTTESQISGMAIAAYQR). A helical transmembrane segment spans residues 447 to 467 (FFSQMGEWTLACVAIIVVLAF). The Cytoplasmic segment spans residues 468-485 (ATRFLFSTPTNMIQESND).

It belongs to the major facilitator superfamily. Proton-dependent oligopeptide transporter (POT/PTR) (TC 2.A.17) family. As to quaternary structure, monomer.

Its subcellular location is the cell inner membrane. Functionally, proton-dependent permease that transports di- and tripeptides. Shows significantly higher specificity towards dipeptides than tripeptides. Has a preference for dipeptides with a C-terminal Lys residue. Can bind Ala-Lys, Lys-Ala, Ala-Ala. Can also transport alanine and trialanine. This chain is Dipeptide and tripeptide permease C, found in Escherichia coli (strain K12).